A 474-amino-acid chain; its full sequence is Aspartyl/glutamyl-tRNA(Asn/Gln) amidotransferase subunit B (474 aa).

The protein belongs to the GatB/GatE family. GatB subfamily. As to quaternary structure, heterotrimer of A, B and C subunits.

It catalyses the reaction L-glutamyl-tRNA(Gln) + L-glutamine + ATP + H2O = L-glutaminyl-tRNA(Gln) + L-glutamate + ADP + phosphate + H(+). It carries out the reaction L-aspartyl-tRNA(Asn) + L-glutamine + ATP + H2O = L-asparaginyl-tRNA(Asn) + L-glutamate + ADP + phosphate + 2 H(+). Functionally, allows the formation of correctly charged Asn-tRNA(Asn) or Gln-tRNA(Gln) through the transamidation of misacylated Asp-tRNA(Asn) or Glu-tRNA(Gln) in organisms which lack either or both of asparaginyl-tRNA or glutaminyl-tRNA synthetases. The reaction takes place in the presence of glutamine and ATP through an activated phospho-Asp-tRNA(Asn) or phospho-Glu-tRNA(Gln). This is Aspartyl/glutamyl-tRNA(Asn/Gln) amidotransferase subunit B from Limosilactobacillus reuteri (strain DSM 20016) (Lactobacillus reuteri).